A 466-amino-acid chain; its full sequence is Cysteine--tRNA ligase (466 aa).

C28 serves as a coordination point for Zn(2+). The 'HIGH' region signature appears at 30 to 40; that stretch reads PTVYNYIHIGN. C208, H233, and E237 together coordinate Zn(2+). A 'KMSKS' region motif is present at residues 265–269; that stretch reads KMSKS. K268 serves as a coordination point for ATP. S269 carries the post-translational modification Phosphoserine.

This sequence belongs to the class-I aminoacyl-tRNA synthetase family. Monomer. Zn(2+) serves as cofactor.

Its subcellular location is the cytoplasm. It carries out the reaction tRNA(Cys) + L-cysteine + ATP = L-cysteinyl-tRNA(Cys) + AMP + diphosphate. The chain is Cysteine--tRNA ligase from Shouchella clausii (strain KSM-K16) (Alkalihalobacillus clausii).